Here is a 394-residue protein sequence, read N- to C-terminus: Phosphoglycerate kinase (394 aa).

Residues 21–23 (DFN), Arg-36, 59–62 (HLGR), Arg-118, and Arg-151 each bind substrate. Ser-183 is subject to Phosphoserine. Lys-201 and Gly-292 together coordinate ATP. The residue at position 299 (Thr-299) is a Phosphothreonine. ATP contacts are provided by residues Glu-323 and 350 to 353 (GGDS).

It belongs to the phosphoglycerate kinase family. Monomer.

It is found in the cytoplasm. The catalysed reaction is (2R)-3-phosphoglycerate + ATP = (2R)-3-phospho-glyceroyl phosphate + ADP. Its pathway is carbohydrate degradation; glycolysis; pyruvate from D-glyceraldehyde 3-phosphate: step 2/5. The polypeptide is Phosphoglycerate kinase (Bacillus cereus (strain ATCC 10987 / NRS 248)).